Here is a 696-residue protein sequence, read N- to C-terminus: Macrolide export ATP-binding/permease protein MacB (696 aa).

The ABC transporter domain maps to 6-244 (IELKNIERYH…KPQNKRTFID (239 aa)). Residue 42 to 49 (GASGSGKS) coordinates ATP. The disordered stretch occupies residues 254 to 287 (HNTEKLNRPNEKNNIDNDNKENNNGYNRNDNSFL). Basic and acidic residues predominate over residues 255–274 (NTEKLNRPNEKNNIDNDNKE). The span at 275–284 (NNNGYNRNDN) shows a compositional bias: low complexity. 4 helical membrane passes run 324-344 (FLTMLGIIIGIIAVVFVIALG), 576-596 (IAFISLIVGGIGIMNIMLVSV), 626-646 (MVSLIGGCIGVGCALLFGGLF), and 659-679 (LSSFLIAFLCSSMIGIVFGYF).

This sequence belongs to the ABC transporter superfamily. Macrolide exporter (TC 3.A.1.122) family. In terms of assembly, homodimer. Part of the tripartite efflux system MacAB-TolC, which is composed of an inner membrane transporter, MacB, a periplasmic membrane fusion protein, MacA, and an outer membrane component, TolC. The complex forms a large protein conduit and can translocate molecules across both the inner and outer membranes. Interacts with MacA.

It is found in the cell inner membrane. In terms of biological role, part of the tripartite efflux system MacAB-TolC. MacB is a non-canonical ABC transporter that contains transmembrane domains (TMD), which form a pore in the inner membrane, and an ATP-binding domain (NBD), which is responsible for energy generation. Confers resistance against macrolides. The polypeptide is Macrolide export ATP-binding/permease protein MacB (Haemophilus ducreyi (strain 35000HP / ATCC 700724)).